A 277-amino-acid polypeptide reads, in one-letter code: Energy-coupling factor transporter ATP-binding protein EcfA1 (277 aa).

Residues 5–240 form the ABC transporter domain; sequence LEVENLVFKY…SEDMVEIGLD (236 aa). Position 40-47 (40-47) interacts with ATP; that stretch reads GQNGSGKS. The Proton acceptor role is filled by E166.

This sequence belongs to the ABC transporter superfamily. Energy-coupling factor EcfA family. Forms a stable energy-coupling factor (ECF) transporter complex composed of 2 membrane-embedded substrate-binding proteins (S component), 2 ATP-binding proteins (A component) and 2 transmembrane proteins (T component). In L.lactis forms a stable complex with EcfA' and EcfT and substrate-binding components. In E.coli forms a stable complex with EcfA', EcfT and individually with 3 tested substrate-binding components (BioY, NiaX and ThiT) with a stoichiometry of 1.1:1:1. The core ECF complex interacts with a number of substrate-specific binding components, including BioY, BioY2, HmpT, NiaX, PanT, QueT, RibU and ThiT.

Its subcellular location is the cell membrane. Functionally, ATP-binding (A) component of a common energy-coupling factor (ECF) ABC-transporter complex. Unlike classic ABC transporters this ECF transporter provides the energy necessary to transport a number of different substrates. In this organism these probably include biotin, thiamine precursor, niacin, pantothenic acid, queuosine precursor, riboflavin and thiamine. Uptake of niacin or riboflavin into proteosomes containing EcfA1A2T and Niax or RibU has been demonstrated. Uptake requires hydrolyzable Mg-ATP and is substrate-specific; NiaX-containing proteosomes did not transport riboflavin. The sequence is that of Energy-coupling factor transporter ATP-binding protein EcfA1 from Lactococcus lactis subsp. cremoris (strain MG1363).